An 868-amino-acid polypeptide reads, in one-letter code: MHEHYQPREIEAAAQLFWDEQKSFEVSEQPGKETYYCLSMFPYPSGKLHMGHVRNYTIGDVISRYQRMQGKNVLQPMGWDAFGMPAENAAMKNNVAPAKWTYENIAYMKTQLRSLGLAVDWSREVTTCKPDYYRWEQWLFTRLFEKGVIYRKNGTVNWDPIDQTVLANEQVIDGRGWRSGALIEKREIPMYYFKITAYADELLESLDELPGWPEQVKTMQRNWIGKSRGMEVQFPYDQASIGEAGTLKVFTTRPDTLMGATYVAVAAEHPLATLAAQDNPELQAFIAECKGGSVAEADMATQEKKGLPTSLFVEHPLTGEKLPVWVANYVLMHYGDGAVMAVPAHDERDFEFATKYNLPIKAVVRTSAGDETPAPWQDAYGEHGELINSGEFNGLDFPGAFDAIEVALLKKNLGQSRTQFRLRDWGISRQRYWGCPIPIIHCDSCGDVPVPQEQLPVVLPEDVVPDGAGSPLARMPEFYECSCPKCGAPAKRETDTMDTFVESSWYYARYASPHYEGGLVDPAAANHWLPVDQYIGGIEHAILHLLYARFFHKLMRDEGLVSSNEPFKNLLTQGMVIAETYYRREANGSYTWYNPADVELERDSKAKIIGAKLISDGLPVEIGGTEKMAKSKNNGVDPQSMIEQYGADTCRLFMMFASPPDMSLEWSDSGVEGAHRFLKRVWRLAQAHVSQGLPGALDIATLSDEQKAIRRAIHLAIKQASQDVGQHHKFNTAIAQVMTLMNVLEKAPQGSEQDRALLQEGLQTVALLLAPITPHISHELWGQLGQSGAIIDAGWPALDESALVQDSLQLVIQVNGKLRGQIEMPASASREEVEAAARSNENVLRFTEGLTIRKVIVVPGKLVNIVAS.

The 'HIGH' region motif lies at 42-52 (PYPSGKLHMGH). Residues 627–631 (KMAKS) carry the 'KMSKS' region motif. Lysine 630 contacts ATP.

Belongs to the class-I aminoacyl-tRNA synthetase family.

It is found in the cytoplasm. It carries out the reaction tRNA(Leu) + L-leucine + ATP = L-leucyl-tRNA(Leu) + AMP + diphosphate. The protein is Leucine--tRNA ligase of Pseudomonas fluorescens (strain ATCC BAA-477 / NRRL B-23932 / Pf-5).